The primary structure comprises 373 residues: Enoyl-[acyl-carrier-protein] reductase, mitochondrial (373 aa).

A mitochondrion-targeting transit peptide spans 1–53 (MLVSQRVTGARARAPQLAGLLEAWYRHGRTTSSYSALSEPSRVRALVYGNHGD). Position 61 is an N6-acetyllysine; alternate (lysine 61). At lysine 61 the chain carries N6-succinyllysine; alternate. The active-site Proton donor is the tyrosine 94. Residues asparagine 167, 193-196 (NSGV), and 216-218 (RDR) each bind NADP(+). N6-acetyllysine; alternate occurs at positions 252 and 267. Lysine 252 and lysine 267 each carry N6-succinyllysine; alternate. Residues 285–288 (YGGM) and 310–312 (FWL) contribute to the NADP(+) site. Lysine 316 carries the post-translational modification N6-succinyllysine. Position 368 (lysine 368) interacts with NADP(+).

It belongs to the zinc-containing alcohol dehydrogenase family. Quinone oxidoreductase subfamily. In terms of assembly, homodimer. Expressed in Purkinje cells (at protein level).

It is found in the mitochondrion. It catalyses the reaction a 2,3-saturated acyl-[ACP] + NADP(+) = a (2E)-enoyl-[ACP] + NADPH + H(+). It carries out the reaction (2E)-butenoyl-[ACP] + NADPH + H(+) = butanoyl-[ACP] + NADP(+). The catalysed reaction is (2E)-hexenoyl-[ACP] + NADPH + H(+) = hexanoyl-[ACP] + NADP(+). The enzyme catalyses (2E)-octenoyl-[ACP] + NADPH + H(+) = octanoyl-[ACP] + NADP(+). It catalyses the reaction (2E)-decenoyl-[ACP] + NADPH + H(+) = decanoyl-[ACP] + NADP(+). It carries out the reaction (2E)-dodecenoyl-[ACP] + NADPH + H(+) = dodecanoyl-[ACP] + NADP(+). The catalysed reaction is (2E)-tetradecenoyl-[ACP] + NADPH + H(+) = tetradecanoyl-[ACP] + NADP(+). The enzyme catalyses (2E)-hexadecenoyl-[ACP] + NADPH + H(+) = hexadecanoyl-[ACP] + NADP(+). Functionally, catalyzes the NADPH-dependent reduction of trans-2-enoyl thioesters in mitochondrial fatty acid synthesis (fatty acid synthesis type II). Fatty acid chain elongation in mitochondria uses acyl carrier protein (ACP) as an acyl group carrier, but the enzyme accepts both ACP and CoA thioesters as substrates in vitro. Displays a preference for medium-chain over short- and long-chain substrates. May provide the octanoyl chain used for lipoic acid biosynthesis, regulating protein lipoylation and mitochondrial respiratory activity particularly in Purkinje cells. Involved in iron homeostasis; affecting Fe-S cluster assembly and ceramide metabolism. Required for proper morphology and bioenergetic functions of mitochondria. Required for maintenance of neurons. The protein is Enoyl-[acyl-carrier-protein] reductase, mitochondrial (Mecr) of Mus musculus (Mouse).